The sequence spans 542 residues: LysM domain-containing protein ARB_00327 (542 aa).

An N-terminal signal peptide occupies residues 1–35 (MLSSVLFPAMRTLLLLKYVFSLISLSAICCQTVSA). N218, N298, N381, and N415 each carry an N-linked (GlcNAc...) asparagine glycan. The region spanning 264–310 (RWYGVKKGDYCNLIVLKFGITMDNFIFLNPALNSNCTNLYAEESYCV) is the LysM 1 domain. The segment at 439–484 (DSDEPTPTTPITTSDDPTSTSATPTTPTTSSKPSPGAPTMTGQPSA) is disordered. Low complexity predominate over residues 443–472 (PTPTTPITTSDDPTSTSATPTTPTTSSKPS). Residues 487–534 (KWHTVTNGESCTVIPKTFGITLEQFLAWNPTVKSDCTENFWAGYAYCV) enclose the LysM 2 domain.

The protein resides in the secreted. Functionally, might have a role in sequestration of chitin oligosaccharides (breakdown products of fungal cell walls that are released during invasion and act as triggers of host immunity) to dampen host defense. This chain is LysM domain-containing protein ARB_00327, found in Arthroderma benhamiae (strain ATCC MYA-4681 / CBS 112371) (Trichophyton mentagrophytes).